The primary structure comprises 716 residues: Polyribonucleotide nucleotidyltransferase (716 aa).

Mg(2+) is bound by residues Asp485 and Asp491. Residues 552-611 (PKITTISVPKEKIRDVIGSGGKVIREIVEYSGAKVDIGDDGTVTIAASNDEQAQKAIARI) form the KH domain. Residues 621–689 (GRIYEGKVVK…DRGKVKLSMR (69 aa)) enclose the S1 motif domain.

This sequence belongs to the polyribonucleotide nucleotidyltransferase family. Requires Mg(2+) as cofactor.

The protein localises to the cytoplasm. It carries out the reaction RNA(n+1) + phosphate = RNA(n) + a ribonucleoside 5'-diphosphate. Involved in mRNA degradation. Catalyzes the phosphorolysis of single-stranded polyribonucleotides processively in the 3'- to 5'-direction. This chain is Polyribonucleotide nucleotidyltransferase, found in Gluconobacter oxydans (strain 621H) (Gluconobacter suboxydans).